A 777-amino-acid chain; its full sequence is MSGRSGNGGQQKMRIRPFMATIDEQYVTQTWELLKRAIQEIQRKNNSGLSFEELYRNAYTMVLHKHGERLYNGLKDVIQDHMASVRIRIIESMNSGSFLETVAESWADHTVAMVMIRDILMYMDRIYVAQNNHVLPVYNLGLDAYRTEILRQNGIGDRIRDALLELIKLDRKSNQINWHGIKNACDMLISLGIDSRTVYEDEFERPLLKETSDYYRDVCKNWLSGDNDACFYLAQVEIAMHDEASRASRYLDKMTEAKILQVMDDVMVAEHIQTIVYMQNGGVKFMLEHKKIEDLTRIFRIFKRIGDSVTVPGGGLKALLKAVSEYLNETGSNIVKNEDLLKNPVNFVNELLQLKDYFSSLLTTAFADDRDFKNRFQHDFETFLNSNRQSPEFVALYMDDMLRSGLKCVSDAEMDNKLDNVMILFRYLQEKDVFEKYFKQYLAKRLLLDKSCSDDVEKALLAKLKTECGCQFTQKLENMFRDKELWLTLATSFRDWREAQPTKMSIDISLRVLTAGVWPTVQCNPVVLPQELSVAYEMFTQYYTEKHTGRKLTINTLLGNADVKATFYPPPKASMSNEENGPGPSSSGESMKERKPEHKILQVNTHQMIILLQFNHHNRISCQQLMDELKIPERELKRNLQSLALGKASQRILVRKNKGKDAIDMSDEFAVNDNFQSKLTRVKVQMVTGKVESEPEIRETRQKVEDDRKLEVEAAIVRIMKARKKLNHNNLVAEVTQQLRHRFMPSPIIIKQRIETLIEREYLARDEHDHRAYQYIA.

Positions 568-596 (YPPPKASMSNEENGPGPSSSGESMKERKP) are disordered. Positions 576–589 (SNEENGPGPSSSGE) are enriched in low complexity. A Cullin neddylation domain is found at 707–769 (DRKLEVEAAI…REYLARDEHD (63 aa)). Lys-721 is covalently cross-linked (Glycyl lysine isopeptide (Lys-Gly) (interchain with G-Cter in NEDD8)).

This sequence belongs to the cullin family. Probable component of multiple cullin-RING-based BCB (BTB-CUL3-BTB) E3 ubiquitin-protein ligase complexes formed by cul-3, rbx-1 and a variable BTB domain-containing protein acting as both, adapter to cullin and substrate recognition component. Interacts with bath-15, bath-40, bath-41, bath-42, C17F4.8, tag-303, D2045.8, F57C2.1, ZC239.15 and B0281.5. Interacts with mel-26 (via BTB domain). Interacts with dcn-1. Post-translationally, neddylated. Deneddylated via its interaction with the COP9 signalosome (CSN) complex.

It is found in the cytoplasm. Its subcellular location is the nucleus. It functions in the pathway protein modification; protein ubiquitination. Functionally, probable core component of multiple cullin-RING-based BCB (BTB-CUL3-BTB) E3 ubiquitin-protein ligase complexes which mediate the ubiquitination and subsequent proteasomal degradation of target proteins. Probably acts as a scaffold protein which may contribute to catalysis through positioning of the substrate and the ubiquitin-conjugating enzyme. Required to target mei-3/katanin for degradation at the meiosis to mitosis transition via its neddylation and deneddylation. Functions in ubiquitin-mediated degradation of CKIs to target cki-1 for degradation. Regulates microtubule stability in the early embryo. In body wall muscles, involved in the organization of myosin thick filaments, likely by regulating the degradation of microtubule severing protein mei-1 downstream of unc-89. Together with spop-1, may promote the ubiquitination and proteasomal degradation of target bromodomain-containing proteins such as bet-1. The chain is Cullin-3 from Caenorhabditis elegans.